The following is a 105-amino-acid chain: Pyrimidine/purine nucleoside phosphorylase (105 aa).

The protein belongs to the nucleoside phosphorylase PpnP family.

The enzyme catalyses a purine D-ribonucleoside + phosphate = a purine nucleobase + alpha-D-ribose 1-phosphate. It catalyses the reaction adenosine + phosphate = alpha-D-ribose 1-phosphate + adenine. It carries out the reaction cytidine + phosphate = cytosine + alpha-D-ribose 1-phosphate. The catalysed reaction is guanosine + phosphate = alpha-D-ribose 1-phosphate + guanine. The enzyme catalyses inosine + phosphate = alpha-D-ribose 1-phosphate + hypoxanthine. It catalyses the reaction thymidine + phosphate = 2-deoxy-alpha-D-ribose 1-phosphate + thymine. It carries out the reaction uridine + phosphate = alpha-D-ribose 1-phosphate + uracil. The catalysed reaction is xanthosine + phosphate = alpha-D-ribose 1-phosphate + xanthine. In terms of biological role, catalyzes the phosphorolysis of diverse nucleosides, yielding D-ribose 1-phosphate and the respective free bases. Can use uridine, adenosine, guanosine, cytidine, thymidine, inosine and xanthosine as substrates. Also catalyzes the reverse reactions. The chain is Pyrimidine/purine nucleoside phosphorylase from Ralstonia nicotianae (strain ATCC BAA-1114 / GMI1000) (Ralstonia solanacearum).